The primary structure comprises 63 residues: Lysis protein (63 aa).

Residues Leu-21 to Trp-43 traverse the membrane as a helical segment.

It belongs to the Leviviricetes lysis protein family.

Its subcellular location is the host cell inner membrane. It localises to the host cell outer membrane. Induces the formation of specific membrane adhesion sites between the inner and outer membranes, apparently leading to host cell lysis. Lysis may be performed via activation of host murein hydrolases. This chain is Lysis protein, found in Escherichia coli (Bacteriophage JP34).